Reading from the N-terminus, the 265-residue chain is Glutamate racemase (265 aa).

Residues 7-8 (DS) and 39-40 (YG) contribute to the substrate site. The active-site Proton donor/acceptor is cysteine 71. 72–73 (NT) contributes to the substrate binding site. Residue cysteine 184 is the Proton donor/acceptor of the active site. 185–186 (TH) serves as a coordination point for substrate.

The protein belongs to the aspartate/glutamate racemases family.

It catalyses the reaction L-glutamate = D-glutamate. It functions in the pathway cell wall biogenesis; peptidoglycan biosynthesis. Functionally, provides the (R)-glutamate required for cell wall biosynthesis. The chain is Glutamate racemase from Sulfurovum sp. (strain NBC37-1).